Consider the following 149-residue polypeptide: Probable cyclic pyranopterin monophosphate synthase (149 aa).

Residues 67 to 69 (LCH) and 103 to 104 (ME) contribute to the substrate site. Asp118 is a catalytic residue.

This sequence belongs to the MoaC family. As to quaternary structure, homohexamer; trimer of dimers.

It catalyses the reaction (8S)-3',8-cyclo-7,8-dihydroguanosine 5'-triphosphate = cyclic pyranopterin phosphate + diphosphate. The protein operates within cofactor biosynthesis; molybdopterin biosynthesis. Catalyzes the conversion of (8S)-3',8-cyclo-7,8-dihydroguanosine 5'-triphosphate to cyclic pyranopterin monophosphate (cPMP). The polypeptide is Probable cyclic pyranopterin monophosphate synthase (Saccharolobus solfataricus (strain ATCC 35092 / DSM 1617 / JCM 11322 / P2) (Sulfolobus solfataricus)).